A 225-amino-acid chain; its full sequence is NAD(P)H-quinone oxidoreductase subunit K, chloroplastic (225 aa).

Residues Cys-43, Cys-44, Cys-108, and Cys-139 each coordinate [4Fe-4S] cluster.

It belongs to the complex I 20 kDa subunit family. NDH is composed of at least 16 different subunits, 5 of which are encoded in the nucleus. Requires [4Fe-4S] cluster as cofactor.

The protein resides in the plastid. It is found in the chloroplast thylakoid membrane. It catalyses the reaction a plastoquinone + NADH + (n+1) H(+)(in) = a plastoquinol + NAD(+) + n H(+)(out). The catalysed reaction is a plastoquinone + NADPH + (n+1) H(+)(in) = a plastoquinol + NADP(+) + n H(+)(out). NDH shuttles electrons from NAD(P)H:plastoquinone, via FMN and iron-sulfur (Fe-S) centers, to quinones in the photosynthetic chain and possibly in a chloroplast respiratory chain. The immediate electron acceptor for the enzyme in this species is believed to be plastoquinone. Couples the redox reaction to proton translocation, and thus conserves the redox energy in a proton gradient. In Draba nemorosa (Woodland whitlowgrass), this protein is NAD(P)H-quinone oxidoreductase subunit K, chloroplastic.